Consider the following 436-residue polypeptide: 3-ketoacyl-CoA thiolase (436 aa).

Cysteine 99 functions as the Acyl-thioester intermediate in the catalytic mechanism. Catalysis depends on proton acceptor residues histidine 392 and cysteine 422.

This sequence belongs to the thiolase-like superfamily. Thiolase family. In terms of assembly, heterotetramer of two alpha chains (FadJ) and two beta chains (FadI).

It localises to the cytoplasm. The enzyme catalyses an acyl-CoA + acetyl-CoA = a 3-oxoacyl-CoA + CoA. It participates in lipid metabolism; fatty acid beta-oxidation. Catalyzes the final step of fatty acid oxidation in which acetyl-CoA is released and the CoA ester of a fatty acid two carbons shorter is formed. The chain is 3-ketoacyl-CoA thiolase from Shewanella pealeana (strain ATCC 700345 / ANG-SQ1).